We begin with the raw amino-acid sequence, 527 residues long: Amidophosphoribosyltransferase (527 aa).

Positions Met1–Ser30 are disordered. Positions Met1–Glu34 are excised as a propeptide. Over residues Ser15–Asn29 the composition is skewed to polar residues. The active-site Nucleophile is Cys35. Residues Cys35–Asp261 enclose the Glutamine amidotransferase type-2 domain. Position 276 (Cys276) interacts with [4Fe-4S] cluster. Residues Ser323, Asp385, and Asp386 each contribute to the Mg(2+) site. [4Fe-4S] cluster is bound by residues Cys422, Cys478, and Cys481.

In the C-terminal section; belongs to the purine/pyrimidine phosphoribosyltransferase family. Mg(2+) serves as cofactor. The cofactor is [4Fe-4S] cluster.

The catalysed reaction is 5-phospho-beta-D-ribosylamine + L-glutamate + diphosphate = 5-phospho-alpha-D-ribose 1-diphosphate + L-glutamine + H2O. Its pathway is purine metabolism; IMP biosynthesis via de novo pathway; N(1)-(5-phospho-D-ribosyl)glycinamide from 5-phospho-alpha-D-ribose 1-diphosphate: step 1/2. Its function is as follows. Catalyzes the formation of phosphoribosylamine from phosphoribosylpyrophosphate (PRPP) and glutamine. This chain is Amidophosphoribosyltransferase, found in Mycobacterium bovis (strain ATCC BAA-935 / AF2122/97).